Consider the following 227-residue polypeptide: Superoxide dismutase [Cu-Zn] (227 aa).

A signal peptide spans 1 to 19; that stretch reads MPKLLPPVVLAGCVVALGA. Cysteine 20 carries N-palmitoyl cysteine lipidation. Cysteine 20 is lipidated: S-diacylglycerol cysteine. Positions 23-55 are disordered; the sequence is PQHASSLPGTTPAVWTGSPSPSGAGAAEAAPAA. Residues 39 to 55 are compositionally biased toward low complexity; it reads GSPSPSGAGAAEAAPAA. Cu cation is bound by residues histidine 103 and histidine 105. A disulfide bond links cysteine 110 and cysteine 221. Aspartate 145 contacts Zn(2+). Residue histidine 182 coordinates Cu cation.

Belongs to the Cu-Zn superoxide dismutase family. It depends on Cu cation as a cofactor. Zn(2+) serves as cofactor.

Its subcellular location is the cell membrane. The enzyme catalyses 2 superoxide + 2 H(+) = H2O2 + O2. Functionally, destroys radicals which are normally produced within the cells and which are toxic to biological systems. May play a role in favoring mycobacterial survival in phagocytes. The sequence is that of Superoxide dismutase [Cu-Zn] (sodC) from Mycolicibacterium paratuberculosis (strain ATCC BAA-968 / K-10) (Mycobacterium paratuberculosis).